The sequence spans 880 residues: MEANSADQKQKPNFLVEVNNIEKQLWTLIHSKTILHTDVSELYAKAGSTYEQIFKSNLQHEELQEVEFCLWKLHYKHIDEFRKGLKTNDHAKHMKAFKLFLSKAAEFYQNLISKVRGYYHRLSEESGEQKSRFLCHRFYICLGDLQRYQEQYLKAHEHPNWSTAATYYLEAAKSWPDSGNPHNQLAVLATYVSDELLALYHCVRSLAVKEPFPGASNNLLLLFEKNRSSPLQSLSTDAEFNYLNPSEKKVSVKERDLSKAKGELVAGIDLWPLVVRTTSFFFLKSSFDEFGRAFASTIRELDAAFAADDRNLEAMLESYQFMDTARKGPYKILQIVAVFIYIFHNLAEANGSDIVKEEVKLTNLALTMVFIVMGRVVERCLKTTPLDSCPLLPALLVFLDYLPFLLDKVEEEEEECRFDEKSKSAISYFFGKLVDILNQLKVKDKNCPAKTLLALWEDHELKSLAPLAPIHALLDFSSNMDLRESFDRGKELRLQRIISSAIDITTRQKKGSQKWLFFDNQRTHFYTTSGELQSNGELFHGNGEGRNRKCVTIGPVEIIPLENERSVPVEEEEVILLKPLVRCQSAPIYSSGIAAKPLSSDCTTSGNQTTTSNDSLRRTLSLIGSESFSFTQGLKDTDPQHLHLEEGTVSGRPPSLSAWVVDKNKEKGRLGLSKPNGLGPIDETGPVSAFDSLSINSSTEHPASSYSPPTPSAPLLPEDASWFHNDASTNKAESFYDQTRYMELPGIMKPYTNPPFVGISSSEWLRRYRESRNLGPAYSYQAQGTNNLRNFMAHGSSKFSLLARYGTPNDSSQNSTFHPQLYMEDHESRGEKLGNVQQSTTNPYGFSDDPGPFLRFLREKEWLNENGQRLRGPPPAYMNN.

TPR repeat units lie at residues 149–183 and 184–217; these read QEQY…NPHN and QLAV…GASN. A disordered region spans residues 669 to 711; it reads RLGLSKPNGLGPIDETGPVSAFDSLSINSSTEHPASSYSPPTP. Over residues 691 to 701 the composition is skewed to polar residues; that stretch reads DSLSINSSTEH.

May play a role in growth and development. The chain is Nonsense-mediated mRNA decay factor SMG7-like from Arabidopsis thaliana (Mouse-ear cress).